The sequence spans 161 residues: Copper transporter 1 (161 aa).

Helical transmembrane passes span 55–75 (GGMY…VEFL) and 109–129 (VAYL…LVAV).

This sequence belongs to the copper transporter (Ctr) (TC 1.A.56) family. SLC31A subfamily. In terms of assembly, self-interacts. Interacts with SWEET11 and COPT2.

The protein localises to the cell membrane. Functionally, involved in the transport of copper, in cooperation with SWEET11 and COPT2. Contributes to the removal of copper (Cu) from xylem, and thus to the sensitivity toward bacterial pathogens such as X.oryzae pv. oryzae (Xoo). This Oryza sativa subsp. japonica (Rice) protein is Copper transporter 1 (COPT1).